The sequence spans 400 residues: WD repeat and FYVE domain-containing protein 2 (400 aa).

WD repeat units lie at residues 22–61 (GSQEVVNMAVIVPKEEGVISVSEDRTVRVWLKRDSGQYWP), 66–105 (AMPSPCSCMSFNPETRRLSIGLDNGTISEFILSEDYNKMT), 112–150 (AHQSRVTMILFVLELEWVLSTGQDKQFAWHCSESGQRLG), 153–192 (RTSAVASGLQFDVETRHVFIGDHSGQVTILKLEQENCTLV), 197–236 (GHTGGVTALCWDPVQRVLFSGSSDHSVIMWDIGGRKGTAI), and 240–279 (GHNDRVQALSYAQHTRQLISCGGDGGIVVWNMDVERQETP). The segment at 281–352 (WLDSDSCQKC…VCDSCHEAIT (72 aa)) adopts an FYVE-type zinc-finger fold. Cys287, Cys290, Cys314, Cys317, Cys322, Cys325, Cys344, and Cys347 together coordinate Zn(2+). One copy of the WD 7 repeat lies at 364–399 (DSKHNIVHVHFDATRGWLLTSGTDKVIKLWDMTPVV).

Homodimer. Interacts (via WD repeats 1-3) with AKT1, AKT2, PRKCZ and PRKCI. Interacts with VAMP2. Forms a complex with VAMP2 and PRKCZ. Interacts with FOXO1. Forms a complex with AKT1 and FOXO1.

It is found in the endosome. Its subcellular location is the early endosome. The protein localises to the cytoplasm. In terms of biological role, acts in an adapter protein-like fashion to mediate the interaction between the kinase PRKCZ and its substrate VAMP2 and increases the PRKCZ-dependent phosphorylation of VAMP2. Positively regulates adipocyte differentiation, by facilitating the phosphorylation and thus inactivation of the anti-adipogenetic transcription factor FOXO1 by the kinase AKT1. Plays a role in endosomal control of AKT2 signaling; required for insulin-stimulated AKT2 phosphorylation and glucose uptake and insulin-stimulated phosphorylation of AKT2 substrates. Participates in transferrin receptor endocytosis. In Homo sapiens (Human), this protein is WD repeat and FYVE domain-containing protein 2 (WDFY2).